Here is a 125-residue protein sequence, read N- to C-terminus: Small ribosomal subunit protein uS13 (125 aa).

Belongs to the universal ribosomal protein uS13 family. Part of the 30S ribosomal subunit. Forms a loose heterodimer with protein S19. Forms two bridges to the 50S subunit in the 70S ribosome.

Located at the top of the head of the 30S subunit, it contacts several helices of the 16S rRNA. In the 70S ribosome it contacts the 23S rRNA (bridge B1a) and protein L5 of the 50S subunit (bridge B1b), connecting the 2 subunits; these bridges are implicated in subunit movement. Contacts the tRNAs in the A and P-sites. In Rickettsia massiliae (strain Mtu5), this protein is Small ribosomal subunit protein uS13.